A 270-amino-acid chain; its full sequence is uncharacterized protein (270 aa).

The segment at 166–186 is disordered; sequence RRKENNISNESVSEEPESPLF.

This is an uncharacterized protein from Ostreid herpesvirus 1 (isolate France) (OsHV-1).